The following is a 271-amino-acid chain: Tryptophan synthase alpha chain (271 aa).

Active-site proton acceptor residues include E51 and D62.

This sequence belongs to the TrpA family. As to quaternary structure, tetramer of two alpha and two beta chains.

The catalysed reaction is (1S,2R)-1-C-(indol-3-yl)glycerol 3-phosphate + L-serine = D-glyceraldehyde 3-phosphate + L-tryptophan + H2O. The protein operates within amino-acid biosynthesis; L-tryptophan biosynthesis; L-tryptophan from chorismate: step 5/5. Its function is as follows. The alpha subunit is responsible for the aldol cleavage of indoleglycerol phosphate to indole and glyceraldehyde 3-phosphate. The chain is Tryptophan synthase alpha chain from Prochlorococcus marinus (strain NATL2A).